The primary structure comprises 161 residues: Nucleotide-binding protein HCH_04620 (161 aa).

It belongs to the YajQ family.

Nucleotide-binding protein. This is Nucleotide-binding protein HCH_04620 from Hahella chejuensis (strain KCTC 2396).